The chain runs to 141 residues: Nucleoside diphosphate kinase (141 aa).

Positions 11, 59, 87, 93, 104, and 114 each coordinate ATP. His117 serves as the catalytic Pros-phosphohistidine intermediate.

This sequence belongs to the NDK family. In terms of assembly, homotetramer. Mg(2+) is required as a cofactor.

It localises to the cytoplasm. The catalysed reaction is a 2'-deoxyribonucleoside 5'-diphosphate + ATP = a 2'-deoxyribonucleoside 5'-triphosphate + ADP. The enzyme catalyses a ribonucleoside 5'-diphosphate + ATP = a ribonucleoside 5'-triphosphate + ADP. In terms of biological role, major role in the synthesis of nucleoside triphosphates other than ATP. The ATP gamma phosphate is transferred to the NDP beta phosphate via a ping-pong mechanism, using a phosphorylated active-site intermediate. The protein is Nucleoside diphosphate kinase of Nitrosomonas eutropha (strain DSM 101675 / C91 / Nm57).